Consider the following 157-residue polypeptide: Transcriptional repressor NrdR (157 aa).

Residues Met-1 to Arg-26 form a disordered region. The segment at Cys-3–Cys-34 is a zinc-finger region. Residues Arg-17–Arg-26 show a composition bias toward basic and acidic residues. The 91-residue stretch at Leu-49–Glu-139 folds into the ATP-cone domain.

It belongs to the NrdR family. The cofactor is Zn(2+).

Negatively regulates transcription of bacterial ribonucleotide reductase nrd genes and operons by binding to NrdR-boxes. The chain is Transcriptional repressor NrdR from Streptococcus gordonii (strain Challis / ATCC 35105 / BCRC 15272 / CH1 / DL1 / V288).